Consider the following 187-residue polypeptide: Ribonuclease HII (187 aa).

The RNase H type-2 domain maps to 1–187; the sequence is MIILGIDEAG…YKPVQVLLNE (187 aa). Asp-7, Glu-8, and Asp-99 together coordinate a divalent metal cation.

The protein belongs to the RNase HII family. It depends on Mn(2+) as a cofactor. Mg(2+) is required as a cofactor.

It localises to the cytoplasm. It carries out the reaction Endonucleolytic cleavage to 5'-phosphomonoester.. Functionally, endonuclease that specifically degrades the RNA of RNA-DNA hybrids. This Francisella tularensis subsp. mediasiatica (strain FSC147) protein is Ribonuclease HII.